The chain runs to 440 residues: Sequestosome-1 (440 aa).

Ala-2 carries the post-translational modification N-acetylalanine. The interaction with LCK stretch occupies residues 2–50; that stretch reads ASLTVKAYLLGKEDAAREIRRFSFCCSPEPEAEAEAAAGPGPCERLLSR. The 100-residue stretch at 3–102 folds into the PB1 domain; the sequence is SLTVKAYLLG…DIFRIYIKEK (100 aa). The residue at position 24 (Ser-24) is a Phosphoserine. An interaction with PRKCZ and dimerization region spans residues 43–107; sequence PCERLLSRVA…YIKEKKECRR (65 aa). An interaction with PAWR region spans residues 50 to 80; sequence RVAALFPALRPGGFQAHYRDEDGDLVAFSSD. Lys-91 is covalently cross-linked (Glycyl lysine isopeptide (Lys-Gly) (interchain with G-Cter in ubiquitin)). The interaction with GABRR3 stretch occupies residues 122 to 224; the sequence is VHPNVICDGC…EARPGPTAES (103 aa). The ZZ-type zinc-finger motif lies at 123 to 173; the sequence is HPNVICDGCNGPVVGTRYKCSVCPDYDLCSVCEGKGLHRGHTKLAFPSPFG. Residues Cys-128, Cys-131, Cys-142, and Cys-145 each coordinate Zn(2+). Tyr-148 is subject to Phosphotyrosine. Residues Cys-151, Cys-154, His-160, and His-163 each contribute to the Zn(2+) site. Phosphoserine occurs at positions 170 and 176. The segment at 170 to 220 is LIM protein-binding (LB); that stretch reads SPFGHLSEGFSHSRWLRKVKHGHFGWPGWEMGPPGNWSPRPPRAGEARPGP. Lys-189 participates in a covalent cross-link: Glycyl lysine isopeptide (Lys-Gly) (interchain with G-Cter in ubiquitin). The disordered stretch occupies residues 196 to 235; it reads PGWEMGPPGNWSPRPPRAGEARPGPTAESASGPSEDPSVN. A phosphoserine mark is found at Ser-207, Ser-233, Ser-249, and Ser-266. A TRAF6-binding motif is present at residues 228 to 233; that stretch reads PSEDPS. Positions 264–390 are disordered; sequence KRSRLTPVSP…ALYPHLPPEA (127 aa). A Phosphothreonine modification is found at Thr-269. The interval 269 to 440 is interaction with NTRK1; the sequence is TPVSPESSST…IQYSKHPPPL (172 aa). 2 positions are modified to phosphoserine: Ser-272 and Ser-282. Low complexity predominate over residues 283 to 296; that stretch reads SSQPSSCCSDPSKP. 2 S-palmitoyl cysteine lipidation sites follow: Cys-289 and Cys-290. Ser-306 is modified (phosphoserine). Positions 310 to 324 are enriched in basic and acidic residues; sequence QMRKIALESEGRPEE. The segment at 321 to 342 is MAP1LC3B-binding; that stretch reads RPEEQMESDNCSGGDDDWTHLS. Ser-328 and Ser-332 each carry phosphoserine. An LIR motif is present at residues 336–341; the sequence is DDWTHL. Residues 337 to 347 are compositionally biased toward basic and acidic residues; sequence DWTHLSSKEVD. Residues 347-352 are interaction with KEAP1; sequence DPSTGE. Ser-349 carries the phosphoserine; by ULK1 modification. Residues 351–373 are compositionally biased toward polar residues; that stretch reads GELQSLQMPESEGPSSLDPSQEG. Phosphoserine is present on residues Ser-355, Ser-361, Ser-365, and Ser-366. Positions 389-434 constitute a UBA domain; that stretch reads EADPRLIESLSQMLSMGFSDEGGWLTRLLQTKNYDIGAALDTIQYS. Ser-403 carries the phosphoserine; by CK2, ULK1 and TBK1 modification. Ser-407 is subject to Phosphoserine; by ULK1. N6-acetyllysine; alternate is present on residues Lys-420 and Lys-435. A Glycyl lysine isopeptide (Lys-Gly) (interchain with G-Cter in ubiquitin); alternate cross-link involves residue Lys-420. A Glycyl lysine isopeptide (Lys-Gly) (interchain with G-Cter in SUMO2); alternate cross-link involves residue Lys-435.

In terms of assembly, homooligomer or heterooligomer; may form homotypic arrays. Dimerization interferes with ubiquitin binding. Component of a ternary complex with PAWR and PRKCZ. Forms a complex with JUB/Ajuba, PRKCZ and TRAF6. Identified in a complex with TRAF6 and CYLD. Identified in a heterotrimeric complex with ubiquitin and ZFAND5, where ZFAND5 and SQSTM1 both interact with the same ubiquitin molecule. Interacts (via LIR motif) with MAP1LC3A and MAP1LC3B, as well as with other ATG8 family members, including GABARAP, GABARAPL1 and GABARAPL2; these interactions are necessary for the recruitment MAP1 LC3 family members to inclusion bodies containing polyubiquitinated protein aggregates and for their degradation by autophagy. Interacts directly with PRKCI and PRKCZ. Interacts with EBI3, LCK, RASA1, NR2F2, NTRK1, NTRK2, NTRK3, NBR1, MAP2K5 and MAPKAPK5. Upon TNF-alpha stimulation, interacts with RIPK1 probably bridging IKBKB to the TNF-R1 complex composed of TNF-R1/TNFRSF1A, TRADD and RIPK1. Interacts with the proteasome subunits PSMD4 and PSMC2. Interacts with TRAF6. Interacts with 'Lys-63'-linked polyubiquitinated MAPT/TAU. Interacts with FHOD3. Interacts with CYLD. Interacts with SESN1. Interacts with SESN2. Interacts with ULK1. Interacts with UBD. Interacts with WDR81; the interaction is direct and regulates the interaction of SQSTM1 with ubiquitinated proteins. Interacts with WDFY3; this interaction is required to recruit WDFY3 to cytoplasmic bodies and to PML bodies. Interacts with LRRC25. Interacts with STING1; leading to relocalization of STING1 to autophagosomes. Interacts (when phosphorylated at Ser-349) with KEAP1; the interaction is direct and inactivates the BCR(KEAP1) complex by sequestering KEAP1 in inclusion bodies, promoting its degradation. Interacts with MOAP1; promoting dissociation of SQSTM1 inclusion bodies that sequester KEAP1. Interacts with GBP1. Interacts with TAX1BP1. Interacts with (ubiquitinated) PEX5; specifically binds PEX5 ubiquitinated at 'Lys-209' in response to reactive oxygen species (ROS). Interacts (via PB1 domain) with TNS2; the interaction leads to sequestration of TNS2 in cytoplasmic aggregates with SQSTM1 and promotes TNS2 ubiquitination and proteasomal degradation. Interacts with IRS1; the interaction is disrupted by the presence of tensin TNS2. Interacts with TRIM5. Interacts with TRIM11 (when ubiquitinated); promoting AIM2 recruitment to autophagosomes and autophagy-dependent degradation of AIM2. Interacts with TRIM13. Interacts with TRIM16. Interacts with TRIM23. Interacts with TRIM50. Interacts with TRIM55. Interacts with ECSIT; this interaction inhibits TLR4 signaling via functional regulation of the TRAF6-ECSIT complex. Interacts with GABRR1, GABRR2 and GABRR3. Interacts with WDR83. Interacts with GRB2. Interacts with USP12; the interaction is independent of USP12 deubiquitinase activity and may be involved in regulation of autophagic flux. Interacts with ASB6. In terms of processing, phosphorylation at Ser-407 by ULK1 destabilizes the UBA dimer interface and increases binding affinity to ubiquitinated proteins. Phosphorylation at Ser-407 also primes for subsequent phosphorylation at Ser-403. Phosphorylation at Ser-403 by CK2 or ULK1 promotes binding to ubiquitinated proteins by increasing the affinity between the UBA domain and polyubiquitin chains. Phosphorylation at Ser-403 by ULK1 is stimulated by SESN2. Phosphorylated at Ser-403 by TBK1, leading to promote relocalization of 'Lys-63'-linked ubiquitinated STING1 to autophagosomes. Phosphorylation at Ser-349 by ULK1 promotes interaction with KEAP1 and inactivation of the BCR(KEAP1) complex, promoting NFE2L2/NRF2 nuclear accumulation and expression of phase II detoxifying enzymes. Phosphorylated in vitro by TTN. Ubiquitinated by UBE2J1 and RNF26 at Lys-435: ubiquitinated SQSTM1 attracts specific vesicle-associated adapters, forming a molecular bridge that restrains cognate vesicles in the perinuclear region and organizes the endosomal pathway for efficient cargo transport. Ubiquitination by UBE2D2 and UBE2D3 increases its ability to bind polyubiquitin chains by destabilizing the UBA dimer interface. Deubiquitination by USP15 releases target vesicles for fast transport into the cell periphery. Ubiquitinated by the BCR(KEAP1) complex at Lys-420, increasing SQSTM1 sequestering activity and promoting its degradation. Ubiquitinated via 'Lys-29' and 'Lys-33'-linked polyubiquitination leading to xenophagic targeting of bacteria and inhibition of their replication. Post-translationally, acetylated at Lys-420 and Lys-435 by KAT5/TIP60, promotes activity by destabilizing the UBA dimer interface and increases binding affinity to ubiquitinated proteins. Deacetylated by HDAC6. In terms of processing, palmitoylation at Cys-289 and Cys-290 by ZDHHC19 is required for efficient autophagic degradation of SQSTM1-cargo complexes by promoting affinity for ATG8 proteins and recruitment of p62 bodies to autophagosomes. Dealmitoylated at Cys-289 and Cys-290 by LYPLA1. (Microbial infection) Cleaved by S.pyogenes SpeB protease; leading to its degradation. Degradation by SpeB prevents autophagy, promoting to S.pyogenes intracellular replication. Post-translationally, (Microbial infection) Deubiquitinated by Epstein-Barr virus BPLF1; leading to inhibition of the recruitment of MAP1LC3A/LC3 to SQSTM1-positive structures. Ubiquitously expressed.

It localises to the cytoplasmic vesicle. Its subcellular location is the autophagosome. The protein localises to the preautophagosomal structure. It is found in the cytoplasm. The protein resides in the cytosol. It localises to the nucleus. Its subcellular location is the PML body. The protein localises to the late endosome. It is found in the lysosome. The protein resides in the endoplasmic reticulum. It localises to the myofibril. Its subcellular location is the sarcomere. Molecular adapter required for selective macroautophagy (aggrephagy) by acting as a bridge between polyubiquitinated proteins and autophagosomes. Promotes the recruitment of ubiquitinated cargo proteins to autophagosomes via multiple domains that bridge proteins and organelles in different steps. SQSTM1 first mediates the assembly and removal of ubiquitinated proteins by undergoing liquid-liquid phase separation upon binding to ubiquitinated proteins via its UBA domain, leading to the formation of insoluble cytoplasmic inclusions, known as p62 bodies. SQSTM1 then interacts with ATG8 family proteins on autophagosomes via its LIR motif, leading to p62 body recruitment to autophagosomes, followed by autophagic clearance of ubiquitinated proteins. SQSTM1 is itself degraded along with its ubiquitinated cargos. Also required to recruit ubiquitinated proteins to PML bodies in the nucleus. Also involved in autophagy of peroxisomes (pexophagy) in response to reactive oxygen species (ROS) by acting as a bridge between ubiquitinated PEX5 receptor and autophagosomes. Acts as an activator of the NFE2L2/NRF2 pathway via interaction with KEAP1: interaction inactivates the BCR(KEAP1) complex by sequestering the complex in inclusion bodies, promoting nuclear accumulation of NFE2L2/NRF2 and subsequent expression of cytoprotective genes. Promotes relocalization of 'Lys-63'-linked ubiquitinated STING1 to autophagosomes. Involved in endosome organization by retaining vesicles in the perinuclear cloud: following ubiquitination by RNF26, attracts specific vesicle-associated adapters, forming a molecular bridge that restrains cognate vesicles in the perinuclear region and organizes the endosomal pathway for efficient cargo transport. Sequesters tensin TNS2 into cytoplasmic puncta, promoting TNS2 ubiquitination and proteasomal degradation. May regulate the activation of NFKB1 by TNF-alpha, nerve growth factor (NGF) and interleukin-1. May play a role in titin/TTN downstream signaling in muscle cells. Adapter that mediates the interaction between TRAF6 and CYLD. This is Sequestosome-1 from Homo sapiens (Human).